The sequence spans 328 residues: Nickel import system permease protein NikB (328 aa).

6 helical membrane-spanning segments follow: residues 11 to 31, 104 to 124, 139 to 159, 170 to 190, 229 to 249, and 279 to 299; these read LMQMIVVLFVISTLTFILMKL, LLISFSTLVVSLCISIPLGII, VISTLSISLPAFFIGIILLFI, ILSQFILPVITLSLGMCAYII, ILPIIPLLGISLGSLIGGTVV, and VLFIGFFVVIINTIADLLTLL. One can recognise an ABC transmembrane type-1 domain in the interval 100-297; that stretch reads APITLLISFS…IINTIADLLT (198 aa).

It belongs to the binding-protein-dependent transport system permease family. OppBC subfamily. In terms of assembly, the complex is composed of two ATP-binding proteins (NikD and NikE), two transmembrane proteins (NikB and NikC) and a solute-binding protein (NikA).

The protein localises to the cell membrane. Its function is as follows. Part of the ABC transporter complex NikABCDE (Opp2) involved in nickel import. Probably responsible for the translocation of the substrate across the membrane. The chain is Nickel import system permease protein NikB from Staphylococcus aureus (strain MSSA476).